The following is a 435-amino-acid chain: Glutamyl-tRNA reductase (435 aa).

Residues 49 to 52, serine 109, 114 to 116, and glutamine 120 contribute to the substrate site; these read TCNR and ETQ. The Nucleophile role is filled by cysteine 50. Residue 189 to 194 participates in NADP(+) binding; it reads GAGEMS.

It belongs to the glutamyl-tRNA reductase family. As to quaternary structure, homodimer.

It carries out the reaction (S)-4-amino-5-oxopentanoate + tRNA(Glu) + NADP(+) = L-glutamyl-tRNA(Glu) + NADPH + H(+). Its pathway is porphyrin-containing compound metabolism; protoporphyrin-IX biosynthesis; 5-aminolevulinate from L-glutamyl-tRNA(Glu): step 1/2. Functionally, catalyzes the NADPH-dependent reduction of glutamyl-tRNA(Glu) to glutamate 1-semialdehyde (GSA). In Listeria innocua serovar 6a (strain ATCC BAA-680 / CLIP 11262), this protein is Glutamyl-tRNA reductase.